The sequence spans 527 residues: DNA polymerase epsilon subunit 2 (527 aa).

The protein belongs to the DNA polymerase epsilon subunit B family. In terms of assembly, component of the DNA polymerase epsilon complex consisting of four subunits: the catalytic subunit POLE and the accessory subunits POLE2, POLE3 and POLE4.

It localises to the nucleus. Functionally, accessory component of the DNA polymerase epsilon complex. Participates in DNA repair and in chromosomal DNA replication. The polypeptide is DNA polymerase epsilon subunit 2 (Homo sapiens (Human)).